The sequence spans 299 residues: CCR4-NOT transcription complex subunit 9 (299 aa).

Met1 is subject to N-acetylmethionine.

This sequence belongs to the CNOT9 family. As to quaternary structure, homodimer. Component of the CCR4-NOT complex; distinct complexes seem to exist that differ in the participation of probably mutually exclusive catalytic subunits. Interacts with MYB, ATF2, RARA, RARB, RARG, RXRA, RXRB and RXRG. Identified in a complex with ATF2 bound to target DNA. Interacts with NANOS2. Directly interacts with ZNF335.

The protein resides in the nucleus. The protein localises to the cytoplasm. Its subcellular location is the P-body. Component of the CCR4-NOT complex which is one of the major cellular mRNA deadenylases and is linked to various cellular processes including bulk mRNA degradation, miRNA-mediated repression, translational repression during translational initiation and general transcription regulation. Additional complex functions may be a consequence of its influence on mRNA expression. Involved in down-regulation of MYB- and JUN-dependent transcription. Enhances ligand-dependent transcriptional activity of nuclear hormone receptors. May play a role in cell differentiation. The sequence is that of CCR4-NOT transcription complex subunit 9 from Bos taurus (Bovine).